Reading from the N-terminus, the 538-residue chain is Syncytin-1 (538 aa).

An N-terminal signal peptide occupies residues 1–20 (MALPYHIFLFTVLLPSFTLT). The Extracellular segment spans residues 21-443 (APPPCRCMTS…NIGPWGLFSQ (423 aa)). Asparagine 169 carries N-linked (GlcNAc...) asparagine glycosylation. Positions 186–189 (CWMC) match the CXXC motif. Intrachain disulfides connect cysteine 186/cysteine 189, cysteine 186/cysteine 405, and cysteine 397/cysteine 404. Asparagine 208, asparagine 214, asparagine 234, asparagine 242, asparagine 245, and asparagine 281 each carry an N-linked (GlcNAc...) asparagine glycan. Residues 320–340 (ILPFVMAAGVLGALGTGIGGI) are fusion peptide. Residues 380-396 (LQNRRALDLLTAERGGT) are immunosuppression. Positions 397–405 (CLFLGEECC) match the CX6CC motif. Asparagine 409 carries an N-linked (GlcNAc...) asparagine glycan. A helical transmembrane segment spans residues 444–464 (WMPWILPFLGPLAAIILLLLF). Residues 465–484 (GPCIFNLLVNFVSSRIEAVK) are essential for the fusiogenic function. Residues 465 to 538 (GPCIFNLLVN…LLRPNSAGSS (74 aa)) are Cytoplasmic-facing. The segment at 501–538 (PLDWPASPRSDVNDIKGTPPEEISTAQPLLRPNSAGSS) is disordered.

This sequence belongs to the gamma type-C retroviral envelope protein family. HERV class-I W env subfamily. As to quaternary structure, the mature envelope protein (Env) consists of a trimer of SU-TM heterodimers attached probably by a labile interchain disulfide bond. Interacts with the C-type lectin CD209/DC-SIGN. In terms of processing, specific enzymatic cleavages in vivo yield mature proteins. Envelope glycoproteins are synthesized as an inactive precursor that is heavily N-glycosylated and processed likely by furin in the Golgi to yield the mature SU and TM proteins. The cleavage site between SU and TM requires the minimal sequence [KR]-X-[KR]-R. The CXXC motif is highly conserved across a broad range of retroviral envelope proteins. It is thought to participate in the formation of a labile disulfide bond possibly with the CX6CC motif present in the transmembrane protein.

It localises to the cell membrane. The protein localises to the virion. This endogenous retroviral envelope protein has retained its original fusogenic properties and participates in trophoblast fusion and the formation of a syncytium during placenta morphogenesis. May recognize and induce fusion through binding of SLC1A4 and SLC1A5. Its function is as follows. Endogenous envelope proteins may have kept, lost or modified their original function during evolution. Retroviral envelope proteins mediate receptor recognition and membrane fusion during early infection. The surface protein (SU) mediates receptor recognition, while the transmembrane protein (TM) acts as a class I viral fusion protein. The protein may have at least 3 conformational states: pre-fusion native state, pre-hairpin intermediate state, and post-fusion hairpin state. During viral and target cell membrane fusion, the coiled coil regions (heptad repeats) assume a trimer-of-hairpins structure, positioning the fusion peptide in close proximity to the C-terminal region of the ectodomain. The formation of this structure appears to drive apposition and subsequent fusion of membranes. This Pongo pygmaeus (Bornean orangutan) protein is Syncytin-1 (ERVW-1).